The sequence spans 392 residues: Small ribosomal subunit protein bS1 (392 aa).

S1 motif domains follow at residues 16–90 (GDKV…LSKR), 108–173 (DEII…LSRK), 194–262 (GDVI…LSIK), and 279–348 (DDVI…LSIK).

Belongs to the bacterial ribosomal protein bS1 family.

Binds mRNA; thus facilitating recognition of the initiation point. It is needed to translate mRNA with a short Shine-Dalgarno (SD) purine-rich sequence. This chain is Small ribosomal subunit protein bS1 (rpsA), found in Staphylococcus haemolyticus (strain JCSC1435).